Here is a 648-residue protein sequence, read N- to C-terminus: Mitotic interactor and substrate of PLK1 (648 aa).

S77 carries the post-translational modification Phosphoserine; by CDK1. Phosphothreonine occurs at positions 149 and 190. At S220 the chain carries Phosphoserine. 2 disordered regions span residues V242–R383 and K430–T460. S253 carries the post-translational modification Phosphoserine; by CDK1. Positions E255 to G281 are enriched in basic and acidic residues. T256 is modified (phosphothreonine; by CDK1). S318 carries the phosphoserine modification. Residues M325 to G339 are compositionally biased toward basic and acidic residues. At T347 the chain carries Phosphothreonine; by CDK1. Polar residues predominate over residues D349–C367. 2 positions are modified to phosphoserine: S352 and S364. Phosphoserine; by PLK1 occurs at positions 365 and 439. Residues E440–Q450 are compositionally biased toward polar residues. A phosphoserine mark is found at S507 and S509. The stretch at D511 to A534 forms a coiled coil. A disordered region spans residues V539 to S568. S541 bears the Phosphoserine; by CDK1 mark. Phosphoserine; by PLK1 is present on S554. Over residues S557–S568 the composition is skewed to polar residues. Position 644 is a phosphoserine (S644).

The protein belongs to the MISP family. Associates with F-actin. Interacts with DCTN1; this interaction regulates DCTN1 distribution at the cell cortex. Interacts with PTK2/FAK and MAPRE1. In terms of processing, phosphorylated by CDK1 and PLK1. CDK1 is the priming kinase for PLK1 phosphorylation. Phosphorylation by PLK1 is required for proper spindle orientation at metaphase.

Its subcellular location is the cell junction. It is found in the focal adhesion. The protein resides in the cytoplasm. It localises to the cytoskeleton. The protein localises to the cell cortex. Functionally, plays a role in mitotic spindle orientation and mitotic progression. Regulates the distribution of dynactin at the cell cortex in a PLK1-dependent manner, thus stabilizing cortical and astral microtubule attachments required for proper mitotic spindle positioning. May link microtubules to the actin cytoskeleton and focal adhesions. May be required for directed cell migration and centrosome orientation. May also be necessary for proper stacking of the Golgi apparatus. The chain is Mitotic interactor and substrate of PLK1 from Mus musculus (Mouse).